Here is a 956-residue protein sequence, read N- to C-terminus: Lon protease homolog, mitochondrial 1 (956 aa).

2 disordered regions span residues 37-57 and 83-123; these read NNNN…NNNN and KKKG…GNEK. The span at 91–123 shows a compositional bias: basic and acidic residues; sequence NNDDNDNEKNEKNEKKVKNEKKEKNEKNDGNEK. A Lon N-terminal domain is found at 159-357; that stretch reads VVIYPSNSVN…MLYHMILNEQ (199 aa). 511–518 serves as a coordination point for ATP; the sequence is GPPGTGKT. Residues 747 to 945 enclose the Lon proteolytic domain; sequence VTPIGVVNGL…KDVFEVAFPN (199 aa). A compositionally biased stretch (low complexity) spans 777–795; the sequence is KPLSSLPPSQQQQNQLEPS. The tract at residues 777-800 is disordered; it reads KPLSSLPPSQQQQNQLEPSIKTTG. Active-site residues include Ser-851 and Lys-894.

Belongs to the peptidase S16 family. In terms of assembly, homohexamer or homoheptamer. Organized in a ring with a central cavity.

The protein localises to the mitochondrion matrix. It carries out the reaction Hydrolysis of proteins in presence of ATP.. ATP-dependent serine protease that mediates the selective degradation of misfolded, unassembled or oxidatively damaged polypeptides as well as certain short-lived regulatory proteins in the mitochondrial matrix. May also have a chaperone function in the assembly of inner membrane protein complexes. Participates in the regulation of mitochondrial gene expression and in the maintenance of the integrity of the mitochondrial genome. Binds to mitochondrial DNA in a site-specific manner. The sequence is that of Lon protease homolog, mitochondrial 1 from Dictyostelium discoideum (Social amoeba).